Reading from the N-terminus, the 723-residue chain is Envelope glycoprotein H (723 aa).

The N-terminal stretch at Met1–Thr23 is a signal peptide. Over Ser24–Phe700 the chain is Virion surface. Asn39, Asn45, Asn144, and Asn174 each carry an N-linked (GlcNAc...) asparagine; by host glycan. Residues His197–Val263 are interaction with gL. N-linked (GlcNAc...) asparagine; by host glycans are attached at residues Asn270, Asn340, Asn411, Asn543, Asn621, and Asn681. The helical transmembrane segment at Met701–His721 threads the bilayer. Over Met722–Ile723 the chain is Intravirion.

This sequence belongs to the herpesviridae glycoprotein H family. In terms of assembly, interacts with glycoprotein L (gL); this interaction is necessary for the correct processing and cell surface expression of gH. The heterodimer gH/gL seems to interact with gB trimers during fusion. Post-translationally, N-glycosylated, O-glycosylated, and sialylated.

It localises to the virion membrane. The protein localises to the host cell membrane. It is found in the host endosome membrane. Its function is as follows. The heterodimer glycoprotein H-glycoprotein L is required for the fusion of viral and plasma membranes leading to virus entry into the host cell. Following initial binding to host receptor, membrane fusion is mediated by the fusion machinery composed of gB and the heterodimer gH/gL. May also be involved in the fusion between the virion envelope and the outer nuclear membrane during virion morphogenesis. This is Envelope glycoprotein H from Guinea pig cytomegalovirus (strain 22122) (GPCMV).